The following is a 1367-amino-acid chain: Mediator of RNA polymerase II transcription subunit 23 (1367 aa).

The disordered stretch occupies residues 1343–1367 (PPQALSSGSPAPQANQVPTALPVTQ). Positions 1346-1367 (ALSSGSPAPQANQVPTALPVTQ) are enriched in polar residues.

The protein belongs to the Mediator complex subunit 23 family. In terms of assembly, component of the Mediator complex, which is composed of MED1, MED4, MED6, MED7, MED8, MED9, MED10, MED11, MED12, MED13, MED13L, MED14, MED15, MED16, MED17, MED18, MED19, MED20, MED21, MED22, MED23, MED24, MED25, MED26, MED27, MED29, MED30, MED31, CCNC, CDK8 and CDC2L6/CDK11. The MED12, MED13, CCNC and CDK8 subunits form a distinct module termed the CDK8 module. Mediator containing the CDK8 module is less active than Mediator lacking this module in supporting transcriptional activation. Individual preparations of the Mediator complex lacking one or more distinct subunits have been variously termed ARC, CRSP, DRIP, PC2, SMCC and TRAP. Interacts with CDK8, CEBPB, CTNNB1, ELK1 and GLI3. Interacts with the adenovirus E1A protein.

The protein localises to the nucleus. Its function is as follows. Component of the Mediator complex, a coactivator involved in the regulated transcription of nearly all RNA polymerase II-dependent genes. Mediator functions as a bridge to convey information from gene-specific regulatory proteins to the basal RNA polymerase II transcription machinery. Mediator is recruited to promoters by direct interactions with regulatory proteins and serves as a scaffold for the assembly of a functional pre-initiation complex with RNA polymerase II and the general transcription factors. Also required for transcriptional activation subsequent to the assembly of the pre-initiation complex. Required for transcriptional activation by adenovirus E1A protein. Required for ELK1-dependent transcriptional activation in response to activated Ras signaling. This is Mediator of RNA polymerase II transcription subunit 23 (Med23) from Rattus norvegicus (Rat).